The chain runs to 534 residues: Putative ammonium transporter 1 (534 aa).

Helical transmembrane passes span 31–51 (SFFL…FAYL), 69–89 (LLDS…LAYG), 115–135 (FFFQ…AVAE), 139–159 (FITY…VLTH), 184–204 (FAGS…AAWI), 223–243 (ILGH…FGFL), 263–283 (ALAM…YLGV), 291–311 (WTLL…CAGC), 318–338 (ACIW…KLMI), 346–366 (LDAF…SSII), and 401–421 (ICAL…FWIL).

The protein belongs to the ammonia transporter channel (TC 1.A.11.2) family.

The protein resides in the membrane. In terms of biological role, involved in the uptake of ammonia. The sequence is that of Putative ammonium transporter 1 (amt-1) from Caenorhabditis elegans.